The primary structure comprises 201 residues: Outer-membrane lipoprotein LolB (201 aa).

The N-terminal stretch at 1 to 18 is a signal peptide; that stretch reads MKWCRLSIILMSLILLAG. C19 carries the N-palmitoyl cysteine lipid modification. C19 carries S-diacylglycerol cysteine lipidation.

Belongs to the LolB family. As to quaternary structure, monomer.

It localises to the cell outer membrane. Functionally, plays a critical role in the incorporation of lipoproteins in the outer membrane after they are released by the LolA protein. This is Outer-membrane lipoprotein LolB from Nitrosococcus oceani (strain ATCC 19707 / BCRC 17464 / JCM 30415 / NCIMB 11848 / C-107).